Consider the following 695-residue polypeptide: Potassium voltage-gated channel subfamily KQT member 4 (695 aa).

The tract at residues M1–A21 is disordered. Over M1 to G96 the chain is Cytoplasmic. Residue R93 participates in a 1,2-diacyl-sn-glycero-3-phospho-(1D-myo-inositol-4,5-bisphosphate) binding. The helical transmembrane segment at W97 to L118 threads the bilayer. Over S119–N129 the chain is Extracellular. Residues E130 to W152 form a helical membrane-spanning segment. The Cytoplasmic portion of the chain corresponds to S153–R168. Residues F169 to A191 form a helical membrane-spanning segment. Residue K172 participates in a 1,2-diacyl-sn-glycero-3-phospho-(1D-myo-inositol-4,5-bisphosphate) binding. Over G192–A202 the chain is Extracellular. A helical; Voltage-sensor membrane pass occupies residues L203–T223. A 1,2-diacyl-sn-glycero-3-phospho-(1D-myo-inositol-4,5-bisphosphate) is bound by residues R219, R220, K225, and S235. Over W224 to S235 the chain is Cytoplasmic. A helical transmembrane segment spans residues K236 to L258. Topologically, residues A259–Y270 are extracellular. Positions A271–H292 form an intramembrane region, pore-forming. T293 is a topological domain (extracellular). The chain crosses the membrane as a helical span at residues W294–F322. The Cytoplasmic portion of the chain corresponds to A323–D695. 2 residues coordinate a 1,2-diacyl-sn-glycero-3-phospho-(1D-myo-inositol-4,5-bisphosphate): H330 and K333. The interval A342 to R351 is interaction with CALM. Disordered regions lie at residues R400 to Q480 and R496 to K515. Composition is skewed to polar residues over residues G443–S452 and T463–Q480. The segment at R535–F549 is interaction with CALM. Positions K546–A650 are C-terminal assembly domain (tetramerization). Positions V587–D606 are disordered. Over residues P591–S605 the composition is skewed to basic and acidic residues. A coiled-coil region spans residues M615–L636.

It belongs to the potassium channel family. KQT (TC 1.A.1.15) subfamily. Kv7.4/KCNQ4 sub-subfamily. Homotetramer. Interacts (via C-terminus) with calmodulin; forms a heterooctameric structure (with 4:4 KCNQ1:CALM stoichiometry); the interaction is calcium-independent, constitutive, participates in the proper assembly of a functional channel. The interaction with calcium-free CALM controls channel trafficking whereas interaction with calcium-bound CALM regulates channel gating. May form a functional heteromultimeric channel with KCNQ3. Interacts with HSP90AB1; promotes cell surface expression of KCNQ4. In terms of tissue distribution, expressed in the outer, but not the inner, sensory hair cells of the cochlea. Slightly expressed in heart, brain and skeletal muscle.

It localises to the basal cell membrane. The catalysed reaction is K(+)(in) = K(+)(out). With respect to regulation, two molecules of phosphatidylinositol-4,5-bisphosphate (PIP2-I and PIP2-II) are essential to activate KCNQ4 channel by inducing the coupling of the voltage-sensing domain (VSD) and the pore-forming domain (PD). Upon channel activation, PIP2-I and PIP2-II disrupt the VSD-calmodulin/CALM interaction, causing the release of CALM from the VSD which triggers the opening of the gate. Calcium suppresses KCNQ4 channel current through calcium-bound CALM C-terminus. Therefore CALM acts as calcium sensor that controls channel activity. ML213 potentiates KCNQ4 channel. KCNQ4 channel is blocked by linopirdin, XE991 and bepridil, whereas clofilium is without significant effect. Muscarinic agonist oxotremorine-M strongly suppress KCNQ4 current in CHO cells in which cloned KCNQ4 channels were coexpressed with M1 muscarinic receptors. Its function is as follows. Pore-forming subunit of the voltage-gated potassium (Kv) channel involved in the regulation of sensory cells excitability in the cochlea. KCNQ4/Kv7.4 channel is composed of 4 pore-forming subunits assembled as tetramers. Promotes the outflow of potassium ions in the repolarization phase of action potential which plays a role in regulating membrane potential of excitable cells. The channel conducts a slowly activating and deactivating current. Current often shows some inward rectification at positive potentials. Channel may be selectively permeable in vitro to other cations besides potassium, in decreasing order of affinity K(+) = Rb(+) &gt; Cs(+) &gt; Na(+). Important for normal physiological function of inner ear such as sensory perception of sound. The protein is Potassium voltage-gated channel subfamily KQT member 4 of Homo sapiens (Human).